A 157-amino-acid polypeptide reads, in one-letter code: Small ribosomal subunit protein uS7 (157 aa).

The protein belongs to the universal ribosomal protein uS7 family. In terms of assembly, part of the 30S ribosomal subunit. Contacts proteins S9 and S11.

Its function is as follows. One of the primary rRNA binding proteins, it binds directly to 16S rRNA where it nucleates assembly of the head domain of the 30S subunit. Is located at the subunit interface close to the decoding center, probably blocks exit of the E-site tRNA. In Psychrobacter cryohalolentis (strain ATCC BAA-1226 / DSM 17306 / VKM B-2378 / K5), this protein is Small ribosomal subunit protein uS7.